A 200-amino-acid chain; its full sequence is UDP-N-acetylglucosamine transferase subunit ALG13 (200 aa).

Belongs to the glycosyltransferase 28 family. Heterodimer with ALG14 to form a functional enzyme.

It is found in the endoplasmic reticulum. The enzyme catalyses an N-acetyl-alpha-D-glucosaminyl-diphospho-di-trans,poly-cis-dolichol + UDP-N-acetyl-alpha-D-glucosamine = an N,N'-diacetylchitobiosyl-diphospho-di-trans,poly-cis-dolichol + UDP + H(+). Functionally, involved in protein N-glycosylation. Essential for the second step of the dolichol-linked oligosaccharide pathway. In Cryptococcus neoformans var. neoformans serotype D (strain B-3501A) (Filobasidiella neoformans), this protein is UDP-N-acetylglucosamine transferase subunit ALG13 (ALG13).